We begin with the raw amino-acid sequence, 127 residues long: Anti-adapter protein IraD (127 aa).

The protein belongs to the GpW/Gp25 family. IraD subfamily. As to quaternary structure, interacts with RssB.

The protein resides in the cytoplasm. Its function is as follows. Inhibits RpoS proteolysis by regulating RssB activity, thereby increasing the stability of the sigma stress factor RpoS during oxidative stress. Its effect on RpoS stability is due to its interaction with RssB, which probably blocks the interaction of RssB with RpoS, and the consequent delivery of the RssB-RpoS complex to the ClpXP protein degradation pathway. This chain is Anti-adapter protein IraD, found in Escherichia coli O127:H6 (strain E2348/69 / EPEC).